The chain runs to 1029 residues: Protein STABILIZED1 (1029 aa).

One can recognise a Ubiquitin-like domain in the interval 1–85 (MVFLSIPNGK…VIIHVLLLGG (85 aa)). Residue Gly-85 forms a Glycyl lysine isopeptide (Gly-Lys) (interchain with K-? in acceptor proteins) linkage. Positions 142–170 (AAPGVGRGAGKPSEAEAEDDEEAEEKRYD) are disordered. Residues 210–243 (DSRRKDRREAKLKEEIEKYRASNPKITEQFADLK) adopt a coiled-coil conformation. 15 HAT repeats span residues 367–399 (YDRN…VEEV), 401–431 (GKIK…CRLA), 432–462 (NPED…KLEH), 463–494 (DVEN…LANE), 496–524 (DARI…LETY), 526–554 (ESKK…LEEA), 639–671 (GSIE…LEKS), 673–705 (GSRE…EKWL), 707–739 (GDVP…LEFE), 741–772 (KEPE…VERE), 774–806 (GNVE…LEER), 808–840 (KHLE…LEEK), 842–874 (NGLN…AELR), 876–908 (DNKR…MAPR), and 940–972 (KKVE…FELQ). The TPR 1 repeat unit spans residues 625–658 (KRTWVADADECKKRGSIETARAIYAHALSVFLTK). The stretch at 794–827 (FKLWLMLGQLEERFKHLEQARKAYDTGLKHCPHC) is one TPR 2 repeat. One copy of the TPR 3 repeat lies at 926 to 959 (PHVTIAVAKLFWQDKKVEKARAWFERAVTVGPDI).

As to quaternary structure, component of a pre-mRNA splicing complex. Interacts with ZOP1. Interacts with PRP31. As to expression, ubiquitous.

It is found in the nucleus. The protein resides in the cajal body. Pre-mRNA splicing factor required for splicing and for the turnover of unstable transcripts. May be a U5 snRNP-associated protein involved in the formation of U4/U6-U5 tri-snRNP. Involved in responses to abiotic stresses. Involved in microRNAs (miRNAs) biogenesis by functioning in primary miRNAs (pri-miRNAs) splicing. Required for DNA methylation and transcriptional silencing through the RNA-directed DNA methylation (RdDM) pathway. The protein is Protein STABILIZED1 (STA1) of Arabidopsis thaliana (Mouse-ear cress).